The chain runs to 92 residues: PqqA binding protein (92 aa).

The protein belongs to the PqqD family. Monomer. Interacts with PqqE.

The protein operates within cofactor biosynthesis; pyrroloquinoline quinone biosynthesis. Its function is as follows. Functions as a PqqA binding protein and presents PqqA to PqqE, in the pyrroloquinoline quinone (PQQ) biosynthetic pathway. The protein is PqqA binding protein of Klebsiella pneumoniae (strain 342).